The primary structure comprises 300 residues: Dihydroorotate dehydrogenase B (NAD(+)), catalytic subunit (300 aa).

FMN contacts are provided by residues S20 and 44–45 (KG). Substrate-binding positions include K44 and 68–72 (NSVGL). FMN-binding residues include N98 and N124. N124 is a substrate binding site. Residue C127 is the Nucleophile of the active site. Positions 162 and 188 each coordinate FMN. 189–190 (NT) is a substrate binding site. Residues G214, 240–241 (GG), and 262–263 (GT) each bind FMN.

This sequence belongs to the dihydroorotate dehydrogenase family. Type 1 subfamily. In terms of assembly, heterotetramer of 2 PyrK and 2 PyrD type B subunits. FMN serves as cofactor.

It localises to the cytoplasm. The catalysed reaction is (S)-dihydroorotate + NAD(+) = orotate + NADH + H(+). Its pathway is pyrimidine metabolism; UMP biosynthesis via de novo pathway; orotate from (S)-dihydroorotate (NAD(+) route): step 1/1. Functionally, catalyzes the conversion of dihydroorotate to orotate with NAD(+) as electron acceptor. This Caldicellulosiruptor saccharolyticus (strain ATCC 43494 / DSM 8903 / Tp8T 6331) protein is Dihydroorotate dehydrogenase B (NAD(+)), catalytic subunit (pyrD).